A 167-amino-acid chain; its full sequence is Brain ribonuclease (167 aa).

The first 26 residues, 1-26 (MALKSLVLLSLLVLVLLLVQVQPSLG), serve as a signal peptide directing secretion. Substrate-binding residues include lysine 33 and arginine 36. The active-site Proton acceptor is the histidine 38. Disulfide bonds link cysteine 52–cysteine 110, cysteine 66–cysteine 121, cysteine 84–cysteine 136, and cysteine 91–cysteine 98. Substrate is bound at residue 67 to 71 (KPVNT). A glycan (N-linked (GlcNAc...) asparagine) is linked at asparagine 88. Substrate contacts are provided by lysine 92 and arginine 111. The active-site Proton donor is histidine 145. The O-linked (GalNAc...) threonine glycan is linked to threonine 155. O-linked (GalNAc...) serine glycosylation occurs at serine 159.

It belongs to the pancreatic ribonuclease family.

The protein localises to the secreted. The sequence is that of Brain ribonuclease (BRN) from Bos taurus (Bovine).